A 51-amino-acid chain; its full sequence is Insulin-2 (51 aa).

Disulfide bonds link Cys-8–Cys-37, Cys-20–Cys-50, and Cys-36–Cys-41.

It belongs to the insulin family. As to quaternary structure, heterodimer of a B chain and an A chain linked by two disulfide bonds.

Its subcellular location is the secreted. Its function is as follows. Insulin decreases blood glucose concentration. It increases cell permeability to monosaccharides, amino acids and fatty acids. It accelerates glycolysis, the pentose phosphate cycle, and glycogen synthesis in liver. This Katsuwonus pelamis (Skipjack tuna) protein is Insulin-2.